Here is a 91-residue protein sequence, read N- to C-terminus: Small ribosomal subunit protein bS20 (91 aa).

This sequence belongs to the bacterial ribosomal protein bS20 family.

Functionally, binds directly to 16S ribosomal RNA. This chain is Small ribosomal subunit protein bS20, found in Mycoplasma mobile (strain ATCC 43663 / 163K / NCTC 11711) (Mesomycoplasma mobile).